Here is a 361-residue protein sequence, read N- to C-terminus: Diacylglycerol O-acyltransferase 2 (361 aa).

Topologically, residues 1–42 are cytoplasmic; sequence MKTLIAAYSGVLRGTGSSILSALQDLFSVTWLNRAKVEKQLQ. A helical membrane pass occupies residues 43–61; sequence VISVLQWVLSFLVLGVACS. Over 62 to 65 the chain is Lumenal; sequence VILM. A helical membrane pass occupies residues 66 to 85; sequence YTFCTDCWLIAVLYFTWLVF. Residues 86–361 are Cytoplasmic-facing; sequence DWNTPKKGGR…LPETEVLEVN (276 aa).

The protein belongs to the diacylglycerol acyltransferase family. In terms of assembly, forms multimeric complexes consisting of several DGAT2 subunits. Interacts with SLC27A1 and this interaction is enhanced in the presence of ZFYVE1.

It is found in the endoplasmic reticulum membrane. The protein localises to the lipid droplet. The protein resides in the cytoplasm. Its subcellular location is the perinuclear region. It catalyses the reaction an acyl-CoA + a 1,2-diacyl-sn-glycerol = a triacyl-sn-glycerol + CoA. It carries out the reaction all-trans-retinol + an acyl-CoA = an all-trans-retinyl ester + CoA. The enzyme catalyses 2-(9Z-octadecenoyl)-glycerol + (9Z)-octadecenoyl-CoA = 1,2-di-(9Z-octadecenoyl)-sn-glycerol + CoA. The catalysed reaction is 1,2-di-(9Z-octadecenoyl)-sn-glycerol + (9Z)-octadecenoyl-CoA = 1,2,3-tri-(9Z-octadecenoyl)-glycerol + CoA. It catalyses the reaction all-trans-retinol + hexadecanoyl-CoA = all-trans-retinyl hexadecanoate + CoA. It carries out the reaction 1-O-(9Z-octadecenyl)-glycerol + (9Z)-octadecenoyl-CoA = 1-O-(9Z-octadecyl)-3-(9Z-octadecenoyl)-glycerol + CoA. The enzyme catalyses 1-(9Z-octadecenoyl)-glycerol + (9Z)-octadecenoyl-CoA = 1,2-di-(9Z-octadecenoyl)-glycerol + CoA. The catalysed reaction is 1,2-di-(9Z-octadecenoyl)-sn-glycerol + hexadecanoyl-CoA = 1,2-di-(9Z)-octadecenoyl-3-hexadecanoyl-sn-glycerol + CoA. It catalyses the reaction 1,3-di-(9Z-octadecenoyl)-glycerol + (9Z)-octadecenoyl-CoA = 1,2,3-tri-(9Z-octadecenoyl)-glycerol + CoA. It carries out the reaction 2,3-di-(9Z)-octadecenoyl-sn-glycerol + (9Z)-octadecenoyl-CoA = 1,2,3-tri-(9Z-octadecenoyl)-glycerol + CoA. The enzyme catalyses 2-(9Z-octadecenoyl)-glycerol + hexadecanoyl-CoA = 1-hexadecanoyl-2-(9Z-octadecenoyl)-sn-glycerol + CoA. It participates in glycerolipid metabolism; triacylglycerol biosynthesis. Its activity is regulated as follows. Inhibited by niacin. In terms of biological role, essential acyltransferase that catalyzes the terminal and only committed step in triacylglycerol synthesis by using diacylglycerol and fatty acyl CoA as substrates. Required for synthesis and storage of intracellular triglycerides. Probably plays a central role in cytosolic lipid accumulation. In liver, is primarily responsible for incorporating endogenously synthesized fatty acids into triglycerides. Also functions as an acyl-CoA retinol acyltransferase (ARAT). Also able to use 1-monoalkylglycerol (1-MAkG) as an acyl acceptor for the synthesis of monoalkyl-monoacylglycerol (MAMAG). This is Diacylglycerol O-acyltransferase 2 (DGAT2) from Bos taurus (Bovine).